The chain runs to 470 residues: MASLFAIGFSKFSPQPTSDYSKLLKVFHPKPYSLKFLFLKTLNPTRFFKVRANDGTEPSDKLQQYFQNQDYDKKYGFLENIDSFTIPKGLSEETIRLISKLKKEPAWILEYRLKAYAKFLKLEEPKWSDNRYPLLDLQDMCFYSAPKKKPTLNSSDIADEADDPKLLEEFDRLDVPLTKKKKCSPKVAVDAVYNSESIAITNKEPLEKSGVIFCSISEAIRKYPDLIKKYLGRVVPSDDNYYAALNTAVFSDGSFCYIPKNTRCPMPLSSYFRMNSIENTGQFERTLIVAEEGSFVEYSEGCTAISHDKNQLHAAVVELYCAEGAEIKYSTRGLCAGDRSKISWTQVEKGFAITWKYPSVVLEGDDSVGEAENARNTSTCDSMLIGDNAAANTYPYIQVKNPSARIEHEASTSKIGEDQIFYFQQRGIDHERALAAMISGFCRDVFNKLPNEFGAEVNQLLSIKLEGSVG.

It belongs to the iron-sulfur cluster assembly SufBD family.

The sequence is that of Iron-sulfur cluster assembly SufBD family protein ABCI9 (ABCI9) from Arabidopsis thaliana (Mouse-ear cress).